The sequence spans 125 residues: Holo-[acyl-carrier-protein] synthase (125 aa).

Positions 7 and 56 each coordinate Mg(2+).

It belongs to the P-Pant transferase superfamily. AcpS family. It depends on Mg(2+) as a cofactor.

The protein resides in the cytoplasm. The enzyme catalyses apo-[ACP] + CoA = holo-[ACP] + adenosine 3',5'-bisphosphate + H(+). Functionally, transfers the 4'-phosphopantetheine moiety from coenzyme A to a Ser of acyl-carrier-protein. This chain is Holo-[acyl-carrier-protein] synthase, found in Chlamydia muridarum (strain MoPn / Nigg).